Here is a 182-residue protein sequence, read N- to C-terminus: MNLSAKTVVVIAIGAALYGIGGLPMFGIPVFANTTLKPAMAVLALFSVLFGPLVGFLVGFIGHWVTDLFAGWGVWLTWVLGSGIVGLIIGLFPSLTRNRLEKGEFNLKDFSLFVVLALLGNVFGYGCSAFLDTILYAEPFTKVFTQLTIIASGNTVLIAIVGYFILKSVAKRNKQSRNLTEA.

5 consecutive transmembrane segments (helical) span residues 8–28, 41–61, 72–92, 110–130, and 146–166; these read VVVIAIGAALYGIGGLPMFGI, AVLALFSVLFGPLVGFLVGFI, WGVWLTWVLGSGIVGLIIGLF, FSLFVVLALLGNVFGYGCSAF, and QLTIIASGNTVLIAIVGYFIL.

It belongs to the UPF0397 family.

It is found in the cell membrane. The polypeptide is UPF0397 protein VV2_1534 (Vibrio vulnificus (strain CMCP6)).